Consider the following 152-residue polypeptide: Small ribosomal subunit protein uS13 (152 aa).

This sequence belongs to the universal ribosomal protein uS13 family.

The protein resides in the cytoplasm. Located at the top of the head of the 40S subunit, it contacts several helices of the 18S rRNA. This Argopecten irradians (Bay scallop) protein is Small ribosomal subunit protein uS13 (RPS18).